A 255-amino-acid chain; its full sequence is Testis-specific H1 histone (255 aa).

The tract at residues 1-54 (MEQALTGEAQSRWPRRGGSGAMAEAPGPSGESRGHSATQLPAEKTVGGPSRGCS) is disordered. Position 56 is a phosphoserine (Ser-56). The segment covering 124–134 (KVPKPRRKPGR) has biased composition (basic residues). Residues 124–255 (KVPKPRRKPG…PKKPAQRTIQ (132 aa)) form a disordered region. A compositionally biased stretch (low complexity) spans 142 to 152 (RAPWRTPAAPR). 2 stretches are compositionally biased toward basic residues: residues 153 to 166 (SSRRRRQPLRKAAR) and 174 to 194 (RNARAKAKANARARRTRRARP). 2 stretches are compositionally biased toward basic and acidic residues: residues 195 to 230 (RAKEPPCARAKEEAGATAADEGRGQAVKEDTTPRSG) and 238 to 248 (KPREEKQEPKK).

It belongs to the histone H1/H5 family. In terms of tissue distribution, testis-specific.

The protein resides in the nucleus. It is found in the chromosome. Its function is as follows. Essential for normal spermatogenesis and male fertility. Required for proper cell restructuring and DNA condensation during the elongation phase of spermiogenesis. Involved in the histone-protamine transition of sperm chromatin and the subsequent production of functional sperm. Binds both double-stranded and single-stranded DNA, ATP and protamine-1. The polypeptide is Testis-specific H1 histone (Homo sapiens (Human)).